The following is a 298-amino-acid chain: Iron-regulated virulence regulatory protein IrgB (298 aa).

The HTH lysR-type domain maps to 1–59 (MQDLSAVKAFHALCQHKSLTAAAKALEQPKSTLSRRLAQLEEDLGQSLLMRQGNRLTLT). A DNA-binding region (H-T-H motif) is located at residues 19–38 (LTAAAKALEQPKSTLSRRLA).

This sequence belongs to the LysR transcriptional regulatory family.

Functionally, transcription activation of the irgA gene. In the presence of sufficient iron, transcription of both irgA and irgB is negatively regulated by a fur-like protein. In low iron conditions, negative regulation of transcription is removed, and production of irgB leads to positive transcriptional activation of irgA. This Vibrio cholerae serotype O1 (strain ATCC 39315 / El Tor Inaba N16961) protein is Iron-regulated virulence regulatory protein IrgB (irgB).